Here is a 341-residue protein sequence, read N- to C-terminus: GTPase Obg (341 aa).

An Obg domain is found at 1 to 159 (MKFLDQAKVY…RTLWLRLKLI (159 aa)). The region spanning 160–327 (ADAGLIGLPN…MLRAGAHMIE (168 aa)) is the OBG-type G domain. GTP contacts are provided by residues 166–173 (GLPNAGKS), 191–195 (FTTLY), 212–215 (DIPG), 279–282 (SQID), and 308–310 (SAV). Mg(2+)-binding residues include Ser173 and Thr193.

This sequence belongs to the TRAFAC class OBG-HflX-like GTPase superfamily. OBG GTPase family. As to quaternary structure, monomer. It depends on Mg(2+) as a cofactor.

It localises to the cytoplasm. Functionally, an essential GTPase which binds GTP, GDP and possibly (p)ppGpp with moderate affinity, with high nucleotide exchange rates and a fairly low GTP hydrolysis rate. Plays a role in control of the cell cycle, stress response, ribosome biogenesis and in those bacteria that undergo differentiation, in morphogenesis control. The polypeptide is GTPase Obg (Bartonella quintana (strain Toulouse) (Rochalimaea quintana)).